The chain runs to 483 residues: Glutamyl-tRNA(Gln) amidotransferase subunit A (483 aa).

Residues Lys75 and Ser150 each act as charge relay system in the active site. The Acyl-ester intermediate role is filled by Ser174.

Belongs to the amidase family. GatA subfamily. As to quaternary structure, heterotrimer of A, B and C subunits.

It catalyses the reaction L-glutamyl-tRNA(Gln) + L-glutamine + ATP + H2O = L-glutaminyl-tRNA(Gln) + L-glutamate + ADP + phosphate + H(+). Allows the formation of correctly charged Gln-tRNA(Gln) through the transamidation of misacylated Glu-tRNA(Gln) in organisms which lack glutaminyl-tRNA synthetase. The reaction takes place in the presence of glutamine and ATP through an activated gamma-phospho-Glu-tRNA(Gln). In Legionella pneumophila (strain Corby), this protein is Glutamyl-tRNA(Gln) amidotransferase subunit A.